Consider the following 502-residue polypeptide: DEP domain-containing protein 7 (502 aa).

In terms of domain architecture, DEP spans 37–127 (LQTQVEVKKR…SSCSLYRFTT (91 aa)).

Belongs to the DEPDC7 family.

This chain is DEP domain-containing protein 7 (DEPDC7), found in Macaca fascicularis (Crab-eating macaque).